Reading from the N-terminus, the 121-residue chain is Large ribosomal subunit protein bL19 (121 aa).

It belongs to the bacterial ribosomal protein bL19 family.

Its function is as follows. This protein is located at the 30S-50S ribosomal subunit interface and may play a role in the structure and function of the aminoacyl-tRNA binding site. The polypeptide is Large ribosomal subunit protein bL19 (Polaromonas sp. (strain JS666 / ATCC BAA-500)).